The primary structure comprises 245 residues: 1-(5-phosphoribosyl)-5-[(5-phosphoribosylamino)methylideneamino] imidazole-4-carboxamide isomerase (245 aa).

Aspartate 8 serves as the catalytic Proton acceptor. Aspartate 129 acts as the Proton donor in catalysis.

It belongs to the HisA/HisF family.

The protein localises to the cytoplasm. The enzyme catalyses 1-(5-phospho-beta-D-ribosyl)-5-[(5-phospho-beta-D-ribosylamino)methylideneamino]imidazole-4-carboxamide = 5-[(5-phospho-1-deoxy-D-ribulos-1-ylimino)methylamino]-1-(5-phospho-beta-D-ribosyl)imidazole-4-carboxamide. It functions in the pathway amino-acid biosynthesis; L-histidine biosynthesis; L-histidine from 5-phospho-alpha-D-ribose 1-diphosphate: step 4/9. The chain is 1-(5-phosphoribosyl)-5-[(5-phosphoribosylamino)methylideneamino] imidazole-4-carboxamide isomerase from Geotalea uraniireducens (strain Rf4) (Geobacter uraniireducens).